Consider the following 286-residue polypeptide: ATP synthase gamma chain (286 aa).

It belongs to the ATPase gamma chain family. F-type ATPases have 2 components, CF(1) - the catalytic core - and CF(0) - the membrane proton channel. CF(1) has five subunits: alpha(3), beta(3), gamma(1), delta(1), epsilon(1). CF(0) has three main subunits: a, b and c.

The protein resides in the cell membrane. Its function is as follows. Produces ATP from ADP in the presence of a proton gradient across the membrane. The gamma chain is believed to be important in regulating ATPase activity and the flow of protons through the CF(0) complex. The sequence is that of ATP synthase gamma chain from Bacillus mycoides (strain KBAB4) (Bacillus weihenstephanensis).